Consider the following 467-residue polypeptide: Asparagine--tRNA ligase (467 aa).

The protein belongs to the class-II aminoacyl-tRNA synthetase family. As to quaternary structure, homodimer.

The protein resides in the cytoplasm. The enzyme catalyses tRNA(Asn) + L-asparagine + ATP = L-asparaginyl-tRNA(Asn) + AMP + diphosphate + H(+). The sequence is that of Asparagine--tRNA ligase from Histophilus somni (strain 2336) (Haemophilus somnus).